Consider the following 367-residue polypeptide: MSANAFGKLFTVTTFGESHGPAIGCVVDGCPPGLEIAPEEFSHDLQRRASGKSRHTSARREADEIEILSGVYEGRTTGTPIGLLIRNTDQRSKDYSNIAQQFRPGHADYTYWQKYGIRDPRGGGRSSARETTMRVAAGVIAKKWLKQRYGVLVRGFLSQLGEIRPAGFDWDAVEDNPFFWPHAAQVPELETYMDALRKSGDSVGARVDVLAGGVPAGWGEPIYGKLDAELAAALMSINAVKGVEIGDGFASAAQKGTEHRDLITPEGFRSNHAGGILGGISTGQAVTASMVLKPTSSLRLPGATVDADGSVVDVITTGRHDPCVGIRATPIAEAMMALVLMDQALRHRAQCGDVGEISPRIPGQVDV.

The disordered stretch occupies residues 39–60 (EEFSHDLQRRASGKSRHTSARR). NADP(+)-binding residues include R48 and R54. Residues 125–127 (RSS), 238–239 (NA), G278, 293–297 (KPTSS), and R319 each bind FMN.

It belongs to the chorismate synthase family. In terms of assembly, homotetramer. The cofactor is FMNH2.

The catalysed reaction is 5-O-(1-carboxyvinyl)-3-phosphoshikimate = chorismate + phosphate. The protein operates within metabolic intermediate biosynthesis; chorismate biosynthesis; chorismate from D-erythrose 4-phosphate and phosphoenolpyruvate: step 7/7. In terms of biological role, catalyzes the anti-1,4-elimination of the C-3 phosphate and the C-6 proR hydrogen from 5-enolpyruvylshikimate-3-phosphate (EPSP) to yield chorismate, which is the branch point compound that serves as the starting substrate for the three terminal pathways of aromatic amino acid biosynthesis. This reaction introduces a second double bond into the aromatic ring system. In Xanthomonas oryzae pv. oryzae (strain MAFF 311018), this protein is Chorismate synthase.